Reading from the N-terminus, the 341-residue chain is Anthranilate phosphoribosyltransferase (341 aa).

5-phospho-alpha-D-ribose 1-diphosphate-binding positions include Gly-81, 84 to 85 (GD), 91 to 94 (NVST), 109 to 117 (KHGNRSVSS), and Ser-121. Gly-81 is an anthranilate binding site. A Mg(2+)-binding site is contributed by Ser-93. Residue Asn-112 participates in anthranilate binding. Residue Arg-167 participates in anthranilate binding. The Mg(2+) site is built by Asp-226 and Glu-227.

Belongs to the anthranilate phosphoribosyltransferase family. Homodimer. Mg(2+) is required as a cofactor.

It catalyses the reaction N-(5-phospho-beta-D-ribosyl)anthranilate + diphosphate = 5-phospho-alpha-D-ribose 1-diphosphate + anthranilate. Its pathway is amino-acid biosynthesis; L-tryptophan biosynthesis; L-tryptophan from chorismate: step 2/5. Functionally, catalyzes the transfer of the phosphoribosyl group of 5-phosphorylribose-1-pyrophosphate (PRPP) to anthranilate to yield N-(5'-phosphoribosyl)-anthranilate (PRA). This is Anthranilate phosphoribosyltransferase from Saccharophagus degradans (strain 2-40 / ATCC 43961 / DSM 17024).